We begin with the raw amino-acid sequence, 65 residues long: Large ribosomal subunit protein bL35 (65 aa).

The segment at 1–26 (MPKMKTNRASAKRFKKTASGGFKAGQ) is disordered.

This sequence belongs to the bacterial ribosomal protein bL35 family.

The polypeptide is Large ribosomal subunit protein bL35 (Oenococcus oeni (strain ATCC BAA-331 / PSU-1)).